Here is a 254-residue protein sequence, read N- to C-terminus: Gamma-glutamyl-gamma-aminobutyrate hydrolase (254 aa).

In terms of domain architecture, Glutamine amidotransferase type-1 spans 16–250 (RNRLKGHATQ…ITACQHHIAE (235 aa)). Cysteine 114 serves as the catalytic Nucleophile. Catalysis depends on residues histidine 222 and glutamate 224.

It belongs to the peptidase C26 family.

It catalyses the reaction 4-(gamma-L-glutamylamino)butanoate + H2O = 4-aminobutanoate + L-glutamate. The protein operates within amine and polyamine degradation; putrescine degradation; 4-aminobutanoate from putrescine: step 4/4. Functionally, involved in the breakdown of putrescine via hydrolysis of the gamma-glutamyl linkage of gamma-glutamyl-gamma-aminobutyrate. This Escherichia coli O157:H7 protein is Gamma-glutamyl-gamma-aminobutyrate hydrolase (puuD).